Here is a 216-residue protein sequence, read N- to C-terminus: FMN-dependent NADH:quinone oxidoreductase 2 (216 aa).

FMN is bound by residues serine 9, 15–17, 96–99, and 140–143; these read SVS, MYNF, and SRGG.

This sequence belongs to the azoreductase type 1 family. In terms of assembly, homodimer. FMN is required as a cofactor.

It carries out the reaction 2 a quinone + NADH + H(+) = 2 a 1,4-benzosemiquinone + NAD(+). It catalyses the reaction N,N-dimethyl-1,4-phenylenediamine + anthranilate + 2 NAD(+) = 2-(4-dimethylaminophenyl)diazenylbenzoate + 2 NADH + 2 H(+). Functionally, quinone reductase that provides resistance to thiol-specific stress caused by electrophilic quinones. In terms of biological role, also exhibits azoreductase activity. Catalyzes the reductive cleavage of the azo bond in aromatic azo compounds to the corresponding amines. The polypeptide is FMN-dependent NADH:quinone oxidoreductase 2 (Xanthomonas axonopodis pv. citri (strain 306)).